A 521-amino-acid chain; its full sequence is GMP synthase [glutamine-hydrolyzing] (521 aa).

A Glutamine amidotransferase type-1 domain is found at 9 to 203 (KILILDFGSQ…VSDICQCKKN (195 aa)). C86 functions as the Nucleophile in the catalytic mechanism. Active-site residues include H177 and E179. Residues 204 to 396 (WTTDNIITKL…LGLPTHMLNC (193 aa)) enclose the GMPS ATP-PPase domain. 231–237 (SGGVDSS) is a binding site for ATP.

Homodimer.

The catalysed reaction is XMP + L-glutamine + ATP + H2O = GMP + L-glutamate + AMP + diphosphate + 2 H(+). The protein operates within purine metabolism; GMP biosynthesis; GMP from XMP (L-Gln route): step 1/1. Catalyzes the synthesis of GMP from XMP. The polypeptide is GMP synthase [glutamine-hydrolyzing] (Vesicomyosocius okutanii subsp. Calyptogena okutanii (strain HA)).